The primary structure comprises 238 residues: Uridylate kinase (238 aa).

12–15 (KLSG) is a binding site for ATP. Residue G54 coordinates UMP. ATP-binding residues include G55 and R59. Residues D74 and 135-142 (TGNPFFTT) contribute to the UMP site. 3 residues coordinate ATP: T162, Y168, and D171.

The protein belongs to the UMP kinase family. As to quaternary structure, homohexamer.

The protein localises to the cytoplasm. It carries out the reaction UMP + ATP = UDP + ADP. Its pathway is pyrimidine metabolism; CTP biosynthesis via de novo pathway; UDP from UMP (UMPK route): step 1/1. Inhibited by UTP. Its function is as follows. Catalyzes the reversible phosphorylation of UMP to UDP. In Herminiimonas arsenicoxydans, this protein is Uridylate kinase.